Consider the following 505-residue polypeptide: GDP-Man:Man(3)GlcNAc(2)-PP-Dol alpha-1,2-mannosyltransferase (505 aa).

The Lumenal segment spans residues 1–4 (MSTM). A helical transmembrane segment spans residues 5–25 (LWVVVAAVLLFVLPVVRVPML). Topologically, residues 26–130 (DLTRRNIIRW…KWVDGSTWKH (105 aa)) are cytoplasmic. An intramembrane region (helical) is located at residues 131 to 151 (LTLVGQAMGSMLLTIEALLRF). Over 152–374 (VPDIWLDTMG…FGINAMWNEH (223 aa)) the chain is Cytoplasmic. The segment at residues 375 to 395 (FGIAVVEYAAAGLISLVHASA) is an intramembrane region (helical). The Cytoplasmic segment spans residues 396-505 (GPLLDIIVPW…EHKTSRLGSN (110 aa)).

This sequence belongs to the glycosyltransferase group 1 family.

The protein localises to the endoplasmic reticulum membrane. The enzyme catalyses an alpha-D-Man-(1-&gt;3)-[alpha-D-Man-(1-&gt;6)]-beta-D-Man-(1-&gt;4)-beta-D-GlcNAc-(1-&gt;4)-alpha-D-GlcNAc-diphospho-di-trans,poly-cis-dolichol + 2 GDP-alpha-D-mannose = an alpha-D-Man-(1-&gt;2)-alpha-D-Man-(1-&gt;2)-alpha-D-Man-(1-&gt;3)-[alpha-D-Man-(1-&gt;6)]-beta-D-Man-(1-&gt;4)-beta-D-GlcNAc-(1-&gt;4)-alpha-D-GlcNAc-diphospho-di-trans,poly-cis-dolichol + 2 GDP + 2 H(+). It participates in protein modification; protein glycosylation. Functionally, GDP-Man:Man(3)GlcNAc(2)-PP-Dol alpha-1,2-mannosyltransferase that operates in the biosynthetic pathway of dolichol-linked oligosaccharides, the glycan precursors employed in protein asparagine (N)-glycosylation. The assembly of dolichol-linked oligosaccharides begins on the cytosolic side of the endoplasmic reticulum membrane and finishes in its lumen. The sequential addition of sugars to dolichol pyrophosphate produces dolichol-linked oligosaccharides containing fourteen sugars, including two GlcNAcs, nine mannoses and three glucoses. Once assembled, the oligosaccharide is transferred from the lipid to nascent proteins by oligosaccharyltransferases. Catalyzes, on the cytoplasmic face of the endoplasmic reticulum, the addition of the fourth and fifth mannose residues to the dolichol-linked oligosaccharide chain, to produce Man(5)GlcNAc(2)-PP-dolichol core oligosaccharide. This Candida glabrata (strain ATCC 2001 / BCRC 20586 / JCM 3761 / NBRC 0622 / NRRL Y-65 / CBS 138) (Yeast) protein is GDP-Man:Man(3)GlcNAc(2)-PP-Dol alpha-1,2-mannosyltransferase (ALG11).